A 126-amino-acid polypeptide reads, in one-letter code: Fluoride-specific ion channel FluC (126 aa).

A run of 4 helical transmembrane segments spans residues 5–25 (ILCV…FYFG), 34–54 (YIFI…GFVL), 71–91 (VTGL…NAVF), and 100–120 (FFLN…LGIY). The Na(+) site is built by glycine 76 and threonine 79.

It belongs to the fluoride channel Fluc/FEX (TC 1.A.43) family.

The protein localises to the cell inner membrane. It carries out the reaction fluoride(in) = fluoride(out). Its activity is regulated as follows. Na(+) is not transported, but it plays an essential structural role and its presence is essential for fluoride channel function. In terms of biological role, fluoride-specific ion channel. Important for reducing fluoride concentration in the cell, thus reducing its toxicity. In Campylobacter hominis (strain ATCC BAA-381 / DSM 21671 / CCUG 45161 / LMG 19568 / NCTC 13146 / CH001A), this protein is Fluoride-specific ion channel FluC.